A 203-amino-acid chain; its full sequence is Small ribosomal subunit protein uS4 (203 aa).

The 64-residue stretch at 93 to 156 (RRLDNVVYRL…MKVPAILEAV (64 aa)) folds into the S4 RNA-binding domain.

This sequence belongs to the universal ribosomal protein uS4 family. In terms of assembly, part of the 30S ribosomal subunit. Contacts protein S5. The interaction surface between S4 and S5 is involved in control of translational fidelity.

Functionally, one of the primary rRNA binding proteins, it binds directly to 16S rRNA where it nucleates assembly of the body of the 30S subunit. In terms of biological role, with S5 and S12 plays an important role in translational accuracy. This Streptococcus pyogenes serotype M49 (strain NZ131) protein is Small ribosomal subunit protein uS4.